A 243-amino-acid polypeptide reads, in one-letter code: Probable transcriptional regulatory protein PTH_1024 (243 aa).

This sequence belongs to the TACO1 family.

Its subcellular location is the cytoplasm. The polypeptide is Probable transcriptional regulatory protein PTH_1024 (Pelotomaculum thermopropionicum (strain DSM 13744 / JCM 10971 / SI)).